A 191-amino-acid chain; its full sequence is Fe/S biogenesis protein NfuA (191 aa).

2 residues coordinate [4Fe-4S] cluster: C149 and C152.

This sequence belongs to the NfuA family. Homodimer. Requires [4Fe-4S] cluster as cofactor.

Its function is as follows. Involved in iron-sulfur cluster biogenesis. Binds a 4Fe-4S cluster, can transfer this cluster to apoproteins, and thereby intervenes in the maturation of Fe/S proteins. Could also act as a scaffold/chaperone for damaged Fe/S proteins. This chain is Fe/S biogenesis protein NfuA, found in Photorhabdus laumondii subsp. laumondii (strain DSM 15139 / CIP 105565 / TT01) (Photorhabdus luminescens subsp. laumondii).